We begin with the raw amino-acid sequence, 570 residues long: PTS system lactose-specific EIICB component (570 aa).

The region spanning 9 to 410 is the PTS EIIC type-3 domain; it reads IEKGKPFFEK…VVDIIIYYPF (402 aa). Helical transmembrane passes span 31-51, 65-85, 104-124, 133-153, 178-198, 223-243, 283-303, 340-360, and 382-402; these read GFISAMPVILFSSIFLLIAYV, AILMKPYNYTMGLVAFLVAGT, INFISTMLAAMCGFLFLASDP, AFMGTKGLLTAFLSAFVTVIV, FKDLIPFSAVIIILYALDLVI, GWIGVTIIFGAFALFWFVGIH, MFIVTFGGTGATLVVPFMFMW, VFFIPFVLAPIVNVWIFKLFV, and IIMGTGFGLWSFVLAITLIVV. Residues 467–570 enclose the PTS EIIB type-3 domain; sequence QTNVLVLCAG…LDFVQQQFEN (104 aa). Residue C474 is the Phosphocysteine intermediate; for EIIB activity of the active site. C474 is subject to Phosphocysteine; by EIIA.

The protein resides in the cell membrane. It carries out the reaction lactose(out) + N(pros)-phospho-L-histidyl-[protein] = lactose 6-phosphate(in) + L-histidyl-[protein]. Functionally, the phosphoenolpyruvate-dependent sugar phosphotransferase system (sugar PTS), a major carbohydrate active transport system, catalyzes the phosphorylation of incoming sugar substrates concomitantly with their translocation across the cell membrane. The enzyme II LacEF PTS system is involved in lactose transport. The chain is PTS system lactose-specific EIICB component from Staphylococcus aureus (strain MSSA476).